The sequence spans 679 residues: HEAT repeat-containing protein 3 (679 aa).

Over residues 1–11 (MGKSRTKRFKR) the composition is skewed to basic residues. Residues 1–40 (MGKSRTKRFKRPQFSPIESCQAEAAAASNGTGDEEDDGPA) form a disordered region. Ser15 is modified (phosphoserine). HEAT repeat units lie at residues 38-69 (GPAA…VQQR) and 74-110 (DLAR…SACG). A Phosphoserine modification is found at Ser144. A Phosphothreonine modification is found at Thr339.

Belongs to the nuclear import and ribosome assembly adapter family. As to quaternary structure, component of a hexameric 5S RNP precursor complex, composed of 5S RNA, RRS1, RPF2/BXDC1, RPL5, RPL11 and HEATR3; this complex acts as a precursor for ribosome assembly.

In terms of biological role, plays a role in ribosome biogenesis and in nuclear import of the 60S ribosomal protein L5/large ribosomal subunit protein uL18 (RPL5). Required for proper erythrocyte maturation. The chain is HEAT repeat-containing protein 3 (Heatr3) from Mus musculus (Mouse).